Here is a 197-residue protein sequence, read N- to C-terminus: Nucleoside triphosphate pyrophosphatase (197 aa).

Catalysis depends on D71, which acts as the Proton acceptor.

Belongs to the Maf family. It depends on a divalent metal cation as a cofactor.

It localises to the cytoplasm. It carries out the reaction a ribonucleoside 5'-triphosphate + H2O = a ribonucleoside 5'-phosphate + diphosphate + H(+). The catalysed reaction is a 2'-deoxyribonucleoside 5'-triphosphate + H2O = a 2'-deoxyribonucleoside 5'-phosphate + diphosphate + H(+). Functionally, nucleoside triphosphate pyrophosphatase. May have a dual role in cell division arrest and in preventing the incorporation of modified nucleotides into cellular nucleic acids. The protein is Nucleoside triphosphate pyrophosphatase of Trichormus variabilis (strain ATCC 29413 / PCC 7937) (Anabaena variabilis).